Here is a 664-residue protein sequence, read N- to C-terminus: MTAQSNITPESIVADLRYLQLLSRSFPTIAAASTEIINLEAILNLPKGTEHFLTDIHGEYEAFQHVLKNASGAVKRKVNEIFGHTLREIEKKELCTLIYYPEEKLQLIKATETDIDDWYLITLNQLVKVCQNVSSKYTRSKVRKSLPAEFSYIIQELLHESTIEPNKHAYINVIISTIISTRRADDFIIAMCNLIQRLTIDSLHIVGDIYDRGPGAHIIMDTLCDYHNFDIQWGNHDILWMGAASGNEACMANVIRLSMRYGNLGTLEDGYGINLLPLATFAMDTYADDPCTIFAPKTNFADSTYNEKTLRLITQMHKAITIIQFKLEANIINRRPEFGMGGRKLLEKIDFERGVFVYEGKEYPLRDTNFPTVDPADPYRLTDEEQELIEKIHYSFMNSEKLKKHMRCLFTYGGMYLVCNSNLLYHASVPLNEDGSFKHVNICGKEYWGKNLLDKIDQLIRTAYFDEDDEEEKRFAMDYIWYLWCGPDAPSFDKDKMATFERYFIADKSLHKETKGYYYALRNKEEICDRILEEFGVTGQHTHIINGHVPVKTIKGEQPMKAGGKLLVIDGGFSKAYQPETGIAGYTLVYHSHGLQLVQHDPFQSTQKAIEEGQDIKSTTFVIEFNSQRMMVKDTDKGKELVTQILDLKKLLVAYRIGLIKEKV.

Belongs to the FBPase class 3 family. The cofactor is Mn(2+).

It catalyses the reaction beta-D-fructose 1,6-bisphosphate + H2O = beta-D-fructose 6-phosphate + phosphate. It functions in the pathway carbohydrate biosynthesis; gluconeogenesis. The chain is Fructose-1,6-bisphosphatase class 3 from Bacteroides fragilis (strain YCH46).